We begin with the raw amino-acid sequence, 99 residues long: Small ribosomal subunit protein bS20 (99 aa).

The protein belongs to the bacterial ribosomal protein bS20 family.

In terms of biological role, binds directly to 16S ribosomal RNA. This Prochlorococcus marinus (strain SARG / CCMP1375 / SS120) protein is Small ribosomal subunit protein bS20.